We begin with the raw amino-acid sequence, 766 residues long: Phosphoribosylformylglycinamidine synthase subunit PurL (766 aa).

The active site involves H49. ATP-binding residues include Y52 and K91. Residue E93 participates in Mg(2+) binding. Substrate-binding positions include 94 to 97 (SHNH) and R116. H95 (proton acceptor) is an active-site residue. Mg(2+) is bound at residue D117. Q240 is a substrate binding site. Residue D268 coordinates Mg(2+). Substrate is bound at residue 312 to 314 (ESQ). 2 residues coordinate ATP: D508 and G545. Residue N546 participates in Mg(2+) binding. S548 contacts substrate.

It belongs to the FGAMS family. As to quaternary structure, monomer. Part of the FGAM synthase complex composed of 1 PurL, 1 PurQ and 2 PurS subunits.

It localises to the cytoplasm. The catalysed reaction is N(2)-formyl-N(1)-(5-phospho-beta-D-ribosyl)glycinamide + L-glutamine + ATP + H2O = 2-formamido-N(1)-(5-O-phospho-beta-D-ribosyl)acetamidine + L-glutamate + ADP + phosphate + H(+). It participates in purine metabolism; IMP biosynthesis via de novo pathway; 5-amino-1-(5-phospho-D-ribosyl)imidazole from N(2)-formyl-N(1)-(5-phospho-D-ribosyl)glycinamide: step 1/2. In terms of biological role, part of the phosphoribosylformylglycinamidine synthase complex involved in the purines biosynthetic pathway. Catalyzes the ATP-dependent conversion of formylglycinamide ribonucleotide (FGAR) and glutamine to yield formylglycinamidine ribonucleotide (FGAM) and glutamate. The FGAM synthase complex is composed of three subunits. PurQ produces an ammonia molecule by converting glutamine to glutamate. PurL transfers the ammonia molecule to FGAR to form FGAM in an ATP-dependent manner. PurS interacts with PurQ and PurL and is thought to assist in the transfer of the ammonia molecule from PurQ to PurL. In Synechococcus sp. (strain CC9902), this protein is Phosphoribosylformylglycinamidine synthase subunit PurL.